A 555-amino-acid polypeptide reads, in one-letter code: Small ribosomal subunit protein uS3m (555 aa).

A disordered region spans residues 1–20; it reads MARKGNPISVRLGKNRSSDS.

Belongs to the universal ribosomal protein uS3 family.

The protein resides in the mitochondrion. This Brassica napus (Rape) protein is Small ribosomal subunit protein uS3m (RPS3).